Consider the following 94-residue polypeptide: uncharacterized protein (94 aa).

Transmembrane regions (helical) follow at residues 7 to 24 (IFFIIVLVGFALFMSFNV) and 39 to 61 (AVPITLSLLFAFACGALTALLFL). The disordered stretch occupies residues 68 to 94 (TRKQKREDSPTSAPTGGVSSPEHVDVP).

It localises to the cell membrane. This is an uncharacterized protein from Treponema pallidum (strain Nichols).